The chain runs to 393 residues: DNA-directed RNA polymerase subunit Rpo1C (393 aa).

It belongs to the RNA polymerase beta' chain family. In terms of assembly, part of the RNA polymerase complex.

Its subcellular location is the cytoplasm. The catalysed reaction is RNA(n) + a ribonucleoside 5'-triphosphate = RNA(n+1) + diphosphate. Functionally, DNA-dependent RNA polymerase (RNAP) catalyzes the transcription of DNA into RNA using the four ribonucleoside triphosphates as substrates. Forms part of the jaw domain. The sequence is that of DNA-directed RNA polymerase subunit Rpo1C from Halococcus morrhuae (Micrococcus morrhuae).